The sequence spans 466 residues: 3-isopropylmalate dehydratase large subunit (466 aa).

Positions 347, 407, and 410 each coordinate [4Fe-4S] cluster.

This sequence belongs to the aconitase/IPM isomerase family. LeuC type 1 subfamily. Heterodimer of LeuC and LeuD. [4Fe-4S] cluster serves as cofactor.

The catalysed reaction is (2R,3S)-3-isopropylmalate = (2S)-2-isopropylmalate. The protein operates within amino-acid biosynthesis; L-leucine biosynthesis; L-leucine from 3-methyl-2-oxobutanoate: step 2/4. Its function is as follows. Catalyzes the isomerization between 2-isopropylmalate and 3-isopropylmalate, via the formation of 2-isopropylmaleate. The chain is 3-isopropylmalate dehydratase large subunit from Pseudoalteromonas translucida (strain TAC 125).